The following is a 414-amino-acid chain: GA-binding protein subunit beta-2 (414 aa).

ANK repeat units follow at residues 5–34 (DLGK…PFTT), 37–66 (LGTS…SRDA), 70–99 (VDRT…DVNA), 103–132 (LQMT…DVYA), and 136–166 (FDKS…QVNT). A Phosphoserine modification is found at Ser218. The stretch at 310 to 362 (EEMKEGSERELLQQQLQEANRRAQEYRHQLLKKEQEAEQYRLRLEAMAQQQTN) forms a coiled coil.

In terms of assembly, heterotetramer of two alpha and two beta subunits. The C-terminal is necessary for the formation of a heterotetrameric GABP-alpha-2/beta-2 complex, and also facilitates homotypic dimerization. Interacts with ADGRB2. High levels in thymus, spleen, kidney and intestine.

The protein resides in the nucleus. Transcription factor capable of interacting with purine rich repeats (GA repeats). Must associate with GABP-alpha to bind DNA. The chain is GA-binding protein subunit beta-2 (Gabpb2) from Mus musculus (Mouse).